The chain runs to 116 residues: NADH-ubiquinone oxidoreductase chain 3 (116 aa).

The next 3 membrane-spanning stretches (helical) occupy residues 3-23, 56-76, and 87-107; these read LITT…TVSF, FFLI…LLPL, and LTLV…IYEW.

It belongs to the complex I subunit 3 family.

The protein resides in the mitochondrion membrane. It catalyses the reaction a ubiquinone + NADH + 5 H(+)(in) = a ubiquinol + NAD(+) + 4 H(+)(out). Its function is as follows. Core subunit of the mitochondrial membrane respiratory chain NADH dehydrogenase (Complex I) that is believed to belong to the minimal assembly required for catalysis. Complex I functions in the transfer of electrons from NADH to the respiratory chain. The immediate electron acceptor for the enzyme is believed to be ubiquinone. The polypeptide is NADH-ubiquinone oxidoreductase chain 3 (MT-ND3) (Oncorhynchus kisutch (Coho salmon)).